Consider the following 154-residue polypeptide: Transcriptional repressor NrdR (154 aa).

The segment at 3–34 (CPFCGNVDTQVKDSRPAEDNVAIRRRRFCPAC) is a zinc-finger region. One can recognise an ATP-cone domain in the interval 49 to 139 (LVVVKSSGRR…VYKNFQAADD (91 aa)).

This sequence belongs to the NrdR family. Zn(2+) serves as cofactor.

In terms of biological role, negatively regulates transcription of bacterial ribonucleotide reductase nrd genes and operons by binding to NrdR-boxes. This Paracoccus denitrificans (strain Pd 1222) protein is Transcriptional repressor NrdR.